The primary structure comprises 304 residues: Mitochondrial RNA-splicing protein MRS4 (304 aa).

Solcar repeat units follow at residues 21-108, 118-200, and 207-300; these read APLH…CKAR, HQPM…ASKF, and YNPL…AKHF. 6 helical membrane passes run 23-41, 83-102, 120-139, 175-194, 209-228, and 275-288; these read LHSQLLAGAFAGIMEHSLM, GVQSVILGAGPAHAVYFGTY, PMKTALSGTIATIAADALMN, SYPTTLAMNIPFAAFNFMIY, PLIHCLCGGISGATCAALTT, and GLKPRIVANIPATA.

It belongs to the mitochondrial carrier (TC 2.A.29) family.

It is found in the mitochondrion inner membrane. MRS4 suppresses a mitochondrial splice defect in the first intron of the COB gene. It may act as a carrier, exerting its suppressor activity via modulation of solute concentrations in the mitochondrion (possibly of cations). Not essential. This is Mitochondrial RNA-splicing protein MRS4 (MRS4) from Saccharomyces cerevisiae (strain ATCC 204508 / S288c) (Baker's yeast).